Consider the following 598-residue polypeptide: Aspartate--tRNA(Asp/Asn) ligase (598 aa).

Glu-175 is a binding site for L-aspartate. The interval Gln-199–Lys-202 is aspartate. Positions 221 and 452 each coordinate L-aspartate. Residue Arg-221 to Glu-223 coordinates ATP. Glu-486 serves as a coordination point for ATP. Arg-493 is a binding site for L-aspartate. Residue Gly-538–Arg-541 participates in ATP binding.

The protein belongs to the class-II aminoacyl-tRNA synthetase family. Type 1 subfamily. As to quaternary structure, homodimer.

The protein resides in the cytoplasm. It carries out the reaction tRNA(Asx) + L-aspartate + ATP = L-aspartyl-tRNA(Asx) + AMP + diphosphate. Its function is as follows. Aspartyl-tRNA synthetase with relaxed tRNA specificity since it is able to aspartylate not only its cognate tRNA(Asp) but also tRNA(Asn). Reaction proceeds in two steps: L-aspartate is first activated by ATP to form Asp-AMP and then transferred to the acceptor end of tRNA(Asp/Asn). In Gluconobacter oxydans (strain 621H) (Gluconobacter suboxydans), this protein is Aspartate--tRNA(Asp/Asn) ligase.